The primary structure comprises 572 residues: Butyrate--CoA ligase AAE11, peroxisomal (572 aa).

Positions 570–572 (SRL) match the Microbody targeting signal motif.

The protein belongs to the ATP-dependent AMP-binding enzyme family. In terms of tissue distribution, expressed in flowers.

Its subcellular location is the peroxisome. The catalysed reaction is a medium-chain fatty acid + ATP + CoA = a medium-chain fatty acyl-CoA + AMP + diphosphate. In terms of biological role, butyrate--CoA ligase that is active in vitro with medium-chain fatty acids, with a preference for hexanoate and octanoate. This chain is Butyrate--CoA ligase AAE11, peroxisomal (AAE11), found in Arabidopsis thaliana (Mouse-ear cress).